A 74-amino-acid polypeptide reads, in one-letter code: Sodium channel neurotoxin MeuNaTxalpha-6 (74 aa).

The signal sequence occupies residues 1–7 (LMTGVES). Residues 9-73 (RDAYIAKPHN…VPIRIPGKCH (65 aa)) form the LCN-type CS-alpha/beta domain. Disulfide bonds link Cys19–Cys72, Cys23–Cys45, Cys31–Cys55, and Cys35–Cys57. Position 74 (Arg74) is a propeptide, removed by a carboxypeptidase.

Belongs to the long (4 C-C) scorpion toxin superfamily. Sodium channel inhibitor family. Alpha subfamily. As to expression, expressed by the venom gland.

It is found in the secreted. Functionally, alpha toxins bind voltage-independently at site-3 of sodium channels (Nav) and inhibit the inactivation of the activated channels, thereby blocking neuronal transmission. This is Sodium channel neurotoxin MeuNaTxalpha-6 from Mesobuthus eupeus (Lesser Asian scorpion).